Reading from the N-terminus, the 138-residue chain is Transcription antitermination protein NusB (138 aa).

The protein belongs to the NusB family.

Functionally, involved in transcription antitermination. Required for transcription of ribosomal RNA (rRNA) genes. Binds specifically to the boxA antiterminator sequence of the ribosomal RNA (rrn) operons. The sequence is that of Transcription antitermination protein NusB from Helicobacter pylori (strain Shi470).